A 108-amino-acid chain; its full sequence is ATP-dependent Clp protease adapter protein ClpS (108 aa).

Belongs to the ClpS family. As to quaternary structure, binds to the N-terminal domain of the chaperone ClpA.

Functionally, involved in the modulation of the specificity of the ClpAP-mediated ATP-dependent protein degradation. The sequence is that of ATP-dependent Clp protease adapter protein ClpS from Cupriavidus metallidurans (strain ATCC 43123 / DSM 2839 / NBRC 102507 / CH34) (Ralstonia metallidurans).